A 93-amino-acid polypeptide reads, in one-letter code: Large ribosomal subunit protein uL23cz/uL23cy (93 aa).

The protein belongs to the universal ribosomal protein uL23 family. In terms of assembly, part of the 50S ribosomal subunit.

It is found in the plastid. The protein localises to the chloroplast. In terms of biological role, binds to 23S rRNA. This chain is Large ribosomal subunit protein uL23cz/uL23cy (rpl23-A), found in Gossypium barbadense (Sea Island cotton).